The primary structure comprises 1013 residues: Retinoblastoma-related protein 1 (1013 aa).

Residues 406–607 (TPVSTAMTTA…EKGSSMYNSL (202 aa)) form a domain A region. The pocket stretch occupies residues 406-858 (TPVSTAMTTA…NEIFIPAVKP (453 aa)). The segment at 608-727 (IVARPSLALE…PGGGGETCAE (120 aa)) is spacer. The interval 728–858 (TGINIFFTKI…NEIFIPAVKP (131 aa)) is domain B. Phosphoserine occurs at positions 885 and 898. The disordered stretch occupies residues 979 to 1013 (VANSLNLQNQNQNQNGSDASSSGGAAPLKTEPTDS). The segment covering 980–1004 (ANSLNLQNQNQNQNGSDASSSGGAA) has biased composition (low complexity).

This sequence belongs to the retinoblastoma protein (RB) family. As to quaternary structure, interacts with the begomovirus replication-associated protein (Rep), the nanovirus Clink protein, the mastrevirus RepA protein, E2FA, E2FB and E2FC. Interacts with MSI1 through its Domain A. Interacts with ATPK1/S6K1. Interacts with SCR. Interacts with HAT2. Interacts with FAMA. Interacts with MYB124 and MYB88. Component of a DREAM-like complex which modulates a variety of developmentally regulated genes and of the mitotic genes in proliferating and differentiated cells. Associates with MYB3R3 in both earlier and later stages of leaves development. Interacts with MYB3R4 only at early stages of leaves development. Highly phosphorylated by CDKA-1 during G1 to S phase transition. Once hyper-phosphorylated, becomes inactive and unable to interact with E2F. Post-translationally, ubiquitinated. Subject to proteasome-dependent degradation during sucrose starvation. As to expression, expressed in actively dividing cells. Detected in the shoot apical meristem, in young leaf primordia and in both sporophytic tissue and the megagametophyte.

The protein resides in the nucleus. In terms of biological role, key regulator of entry into cell division. Acts as a transcription repressor of E2F target genes, whose activity is required for progress from the G1 to the S phase of the cell cycle. Hyperphosphorylation by CDKA-1 prevents the binding to E2F transcription factors, allowing G1 to S phase transition to operate. Forms a stable complex with E2FA that functions in maintaining cell proliferation through repression of cell differentiation. Plays a central role in the mechanism controlling meristem cell differentiation, cell fate establishment and cell fate maintenance during organogenesis and gametogenesis. Required during lateral organ production. Also involved in controlling asymmetric divisions of stem cells in different stem cell niches. Acts as a negative regulator of cell proliferation during leaf and gametophytes development. At later stages of development, restricts the progression through additional endocycles. In the leaf, plays a role in the control of the mesophyll differentiation. Another role is its implication in the regulation of imprinted genes. Acts together with MSI1 to repress the expression of MET1 during gametogenesis. This in turn activates expression of the imprinted genes FIS2 and FWA. Regulates many genes of the polycomb repressive complex 2 (PRC2). Plays an important role in meiosis affecting different aspects of this complex process. Functions as a positive regulator of the developmental switch from embryonic heterotrophic growth to autotrophic growth. Interaction with mastrevirus RepA or nanovirus Clink protein disrupts the RBR/E2F interaction and releases the transcription of replicative enzymes needed by the virus by increasing the E2F DNA-binding activity. The protein is Retinoblastoma-related protein 1 (RBR1) of Arabidopsis thaliana (Mouse-ear cress).